Here is a 293-residue protein sequence, read N- to C-terminus: Elongation factor Ts (293 aa).

The tract at residues 81–84 is involved in Mg(2+) ion dislocation from EF-Tu; that stretch reads TDFV.

The protein belongs to the EF-Ts family.

The protein resides in the cytoplasm. In terms of biological role, associates with the EF-Tu.GDP complex and induces the exchange of GDP to GTP. It remains bound to the aminoacyl-tRNA.EF-Tu.GTP complex up to the GTP hydrolysis stage on the ribosome. The polypeptide is Elongation factor Ts (Thioalkalivibrio sulfidiphilus (strain HL-EbGR7)).